Reading from the N-terminus, the 166-residue chain is Lipoprotein signal peptidase (166 aa).

4 helical membrane-spanning segments follow: residues 9-29 (ASGA…FDQL), 45-65 (ALTS…FGFL), 71-91 (WQRW…CFLL), and 100-120 (FSVS…DRLV). Residues Asp-126 and Asp-144 contribute to the active site. Residues 135–155 (WHFPAFNLADSAITVGAVLLI) traverse the membrane as a helical segment.

It belongs to the peptidase A8 family.

It is found in the cell inner membrane. It catalyses the reaction Release of signal peptides from bacterial membrane prolipoproteins. Hydrolyzes -Xaa-Yaa-Zaa-|-(S,diacylglyceryl)Cys-, in which Xaa is hydrophobic (preferably Leu), and Yaa (Ala or Ser) and Zaa (Gly or Ala) have small, neutral side chains.. It functions in the pathway protein modification; lipoprotein biosynthesis (signal peptide cleavage). In terms of biological role, this protein specifically catalyzes the removal of signal peptides from prolipoproteins. The polypeptide is Lipoprotein signal peptidase (Burkholderia cenocepacia (strain HI2424)).